A 427-amino-acid chain; its full sequence is Trigger factor (427 aa).

In terms of domain architecture, PPIase FKBP-type spans 163-248; sequence GDTVVIDFVG…IHEVKTKEVP (86 aa).

Belongs to the FKBP-type PPIase family. Tig subfamily.

The protein resides in the cytoplasm. The enzyme catalyses [protein]-peptidylproline (omega=180) = [protein]-peptidylproline (omega=0). Involved in protein export. Acts as a chaperone by maintaining the newly synthesized protein in an open conformation. Functions as a peptidyl-prolyl cis-trans isomerase. The polypeptide is Trigger factor (Streptococcus agalactiae serotype Ia (strain ATCC 27591 / A909 / CDC SS700)).